A 519-amino-acid chain; its full sequence is Cytochrome P450 52A12 (519 aa).

C467 serves as a coordination point for heme.

It belongs to the cytochrome P450 family. Requires heme as cofactor.

The protein resides in the membrane. Together with an NADPH cytochrome P450 the enzyme system catalyzes the terminal hydroxylation as the first step in the assimilation of alkanes and fatty acids. In Debaryomyces hansenii (Yeast), this protein is Cytochrome P450 52A12 (CYP52A12).